The chain runs to 240 residues: CD302 antigen (240 aa).

The C-type lectin domain maps to 40 to 160 (FQDSCYIFLQ…CEVSSVEGTL (121 aa)). A glycan (N-linked (GlcNAc...) asparagine) is linked at N117. Cysteines 136 and 151 form a disulfide. A helical membrane pass occupies residues 177–197 (ILISALVIASTVILTVLGAVI). Residues 198–240 (WFLYKRNLDSGFTTVFSTAPQSPFNDDCVLVVAEENEYAVQFD) are Cytoplasmic-facing.

The protein resides in the membrane. Its subcellular location is the cell projection. The protein localises to the filopodium. It localises to the cytoplasm. It is found in the cell cortex. Its function is as follows. Potential multifunctional C-type lectin receptor that may play roles in endocytosis and phagocytosis as well as in cell adhesion and migration. This is CD302 antigen from Sus scrofa (Pig).